Reading from the N-terminus, the 323-residue chain is DNA repair and recombination protein RadA (323 aa).

Residue 115–122 (GEFGSGKT) coordinates ATP.

It belongs to the eukaryotic RecA-like protein family.

Its function is as follows. Involved in DNA repair and in homologous recombination. Binds and assemble on single-stranded DNA to form a nucleoprotein filament. Hydrolyzes ATP in a ssDNA-dependent manner and promotes DNA strand exchange between homologous DNA molecules. This is DNA repair and recombination protein RadA from Thermoplasma volcanium (strain ATCC 51530 / DSM 4299 / JCM 9571 / NBRC 15438 / GSS1).